The chain runs to 184 residues: ATP synthase subunit delta (184 aa).

It belongs to the ATPase delta chain family. F-type ATPases have 2 components, F(1) - the catalytic core - and F(0) - the membrane proton channel. F(1) has five subunits: alpha(3), beta(3), gamma(1), delta(1), epsilon(1). CF(0) has four main subunits: a(1), b(1), b'(1) and c(10-14). The alpha and beta chains form an alternating ring which encloses part of the gamma chain. F(1) is attached to F(0) by a central stalk formed by the gamma and epsilon chains, while a peripheral stalk is formed by the delta, b and b' chains.

The protein localises to the cellular thylakoid membrane. Its function is as follows. F(1)F(0) ATP synthase produces ATP from ADP in the presence of a proton or sodium gradient. F-type ATPases consist of two structural domains, F(1) containing the extramembraneous catalytic core and F(0) containing the membrane proton channel, linked together by a central stalk and a peripheral stalk. During catalysis, ATP synthesis in the catalytic domain of F(1) is coupled via a rotary mechanism of the central stalk subunits to proton translocation. Functionally, this protein is part of the stalk that links CF(0) to CF(1). It either transmits conformational changes from CF(0) to CF(1) or is implicated in proton conduction. The chain is ATP synthase subunit delta from Gloeothece citriformis (strain PCC 7424) (Cyanothece sp. (strain PCC 7424)).